Consider the following 360-residue polypeptide: MQGMALNQLLACLKWLGEFQVLACIPLKGSIHARDVADLTGVPETQLCRVVRLMATAGFLHEPRPGQIAHTVLSGAFVTDLSLLDAGMFLSETAAPVALHMATATERQSDLQASNSAYSVAFNTSQPFEAACVERSRLHRQWSAYSRCAGDAEDKTVELFGQLNWRSLGSATIVDSCAQSTDLVLELAKLYPSLHFVVQMNNAAAVQQEACRRPESEDVKRRMKIQERMPSAPQTVKDAAVYILRLPATLRPSAVQILAELRAHLGALRANSSATLILATPLLPEPGTLDPDSEARARVRDLARLQLTNETDLELSELIELVNGVHDSNGRFRVVSKLRSRDSAATAALGIKYQAVPTAP.

In terms of domain architecture, HTH iclR-type spans 3-67; it reads GMALNQLLAC…GFLHEPRPGQ (65 aa). Residues 33-52 constitute a DNA-binding region (H-T-H motif); the sequence is ARDVADLTGVPETQLCRVVR.

It is found in the nucleus. Functionally, transcriptional coactivator; part of the gene cluster that mediates the biosynthesis of an emodin derivative that may be involved in black Sigatoka disease of banana. With MYCFIDRAFT_198930, coregulates the production of the PKS8-1 cluster product. The chain is Transcriptional coactivator MYCFIDRAFT_190109 from Pseudocercospora fijiensis (strain CIRAD86) (Black leaf streak disease fungus).